Consider the following 125-residue polypeptide: uncharacterized protein (125 aa).

Residues 14–112 (CPVEFTLDVI…WGESNRDVLE (99 aa)) form the HTH hxlR-type domain.

This is an uncharacterized protein from Bacillus subtilis (strain 168).